The sequence spans 208 residues: Thymidylate kinase (208 aa).

Residue 10 to 17 (GIDGSGKT) coordinates ATP.

The protein belongs to the thymidylate kinase family.

It carries out the reaction dTMP + ATP = dTDP + ADP. Functionally, phosphorylation of dTMP to form dTDP in both de novo and salvage pathways of dTTP synthesis. This is Thymidylate kinase from Ligilactobacillus salivarius (strain UCC118) (Lactobacillus salivarius).